Reading from the N-terminus, the 249-residue chain is Uridylate kinase (249 aa).

15 to 18 contributes to the ATP binding site; it reads KLSG. The segment at 23-28 is involved in allosteric activation by GTP; it reads GDEGFG. Gly-57 provides a ligand contact to UMP. Residues Gly-58 and Arg-62 each contribute to the ATP site. Residues Asp-77 and 138–145 contribute to the UMP site; that span reads TGNPFFTT. Thr-165, Tyr-171, and Asp-174 together coordinate ATP.

This sequence belongs to the UMP kinase family. In terms of assembly, homohexamer.

It localises to the cytoplasm. The enzyme catalyses UMP + ATP = UDP + ADP. Its pathway is pyrimidine metabolism; CTP biosynthesis via de novo pathway; UDP from UMP (UMPK route): step 1/1. Allosterically activated by GTP. Inhibited by UTP. In terms of biological role, catalyzes the reversible phosphorylation of UMP to UDP. The sequence is that of Uridylate kinase from Pseudoalteromonas translucida (strain TAC 125).